A 236-amino-acid polypeptide reads, in one-letter code: MDVFAFNASLSMCKDVAGIAGNIFAFGLFVSPMPTFRRIMRNKSTEQFSGLPYIYALLNCLICLWYGTPFISHSNAMLMTVNSVGATFQLCYIILFIMHTDKKNKMKMLGLLFVVFAVVGVIVAGSLQIPDQLTRWYFVGFLSCGSLVSMFASPLFVINLVIRTKSVEFMPFYLSLSTFLMSASFLLYGLFNSDAFVYTPNGIGTILGIVQLALYCYYHRNSIEEETKEPLIVSYV.

At 1-15 the chain is on the extracellular side; the sequence is MDVFAFNASLSMCKD. N7 is a glycosylation site (N-linked (GlcNAc...) asparagine). A helical membrane pass occupies residues 16–36; sequence VAGIAGNIFAFGLFVSPMPTF. The MtN3/slv 1 domain occupies 18-103; that stretch reads GIAGNIFAFG…ILFIMHTDKK (86 aa). The Cytoplasmic segment spans residues 37–50; sequence RRIMRNKSTEQFSG. The helical transmembrane segment at 51–71 threads the bilayer; that stretch reads LPYIYALLNCLICLWYGTPFI. At 72-76 the chain is on the extracellular side; that stretch reads SHSNA. The chain crosses the membrane as a helical span at residues 77-97; it reads MLMTVNSVGATFQLCYIILFI. At 98-108 the chain is on the cytoplasmic side; that stretch reads MHTDKKNKMKM. The chain crosses the membrane as a helical span at residues 109–129; it reads LGLLFVVFAVVGVIVAGSLQI. The Extracellular segment spans residues 130–137; the sequence is PDQLTRWY. A helical transmembrane segment spans residues 138 to 158; that stretch reads FVGFLSCGSLVSMFASPLFVI. The region spanning 138–221 is the MtN3/slv 2 domain; that stretch reads FVGFLSCGSL…LALYCYYHRN (84 aa). Topologically, residues 159-170 are cytoplasmic; that stretch reads NLVIRTKSVEFM. The chain crosses the membrane as a helical span at residues 171–191; sequence PFYLSLSTFLMSASFLLYGLF. At 192-194 the chain is on the extracellular side; that stretch reads NSD. The chain crosses the membrane as a helical span at residues 195-215; sequence AFVYTPNGIGTILGIVQLALY. The Cytoplasmic portion of the chain corresponds to 216 to 236; it reads CYYHRNSIEEETKEPLIVSYV.

This sequence belongs to the SWEET sugar transporter family. In terms of assembly, forms heterooligomers with SWEET17.

The protein localises to the cell membrane. Mediates both low-affinity uptake and efflux of sugar across the plasma membrane. The polypeptide is Bidirectional sugar transporter SWEET2 (Arabidopsis thaliana (Mouse-ear cress)).